Consider the following 157-residue polypeptide: NAD(P)H-quinone oxidoreductase subunit N (157 aa).

The protein belongs to the complex I NdhN subunit family. NDH-1 can be composed of about 15 different subunits; different subcomplexes with different compositions have been identified which probably have different functions.

The protein localises to the cellular thylakoid membrane. The enzyme catalyses a plastoquinone + NADH + (n+1) H(+)(in) = a plastoquinol + NAD(+) + n H(+)(out). It carries out the reaction a plastoquinone + NADPH + (n+1) H(+)(in) = a plastoquinol + NADP(+) + n H(+)(out). Functionally, NDH-1 shuttles electrons from an unknown electron donor, via FMN and iron-sulfur (Fe-S) centers, to quinones in the respiratory and/or the photosynthetic chain. The immediate electron acceptor for the enzyme in this species is believed to be plastoquinone. Couples the redox reaction to proton translocation, and thus conserves the redox energy in a proton gradient. Cyanobacterial NDH-1 also plays a role in inorganic carbon-concentration. This chain is NAD(P)H-quinone oxidoreductase subunit N, found in Synechococcus sp. (strain CC9902).